The following is a 328-amino-acid chain: Adenosine receptor A1 (328 aa).

Residues 1 to 10 (MPPSISAFQA) are Extracellular-facing. Residues 11–33 (AYIGIEVLIALVSVPGNVLVIWA) traverse the membrane as a helical segment. Topologically, residues 34–46 (VKVNQALRDATFC) are cytoplasmic. The helical transmembrane segment at 47–69 (FIVSLAVADVAVGALVIPLAILI) threads the bilayer. At 70 to 80 (NIGPETYFHTC) the chain is on the extracellular side. The cysteines at positions 80 and 169 are disulfide-linked. The helical transmembrane segment at 81–102 (LMVACPVLILTQSSILALLAIA) threads the bilayer. Residues 103-123 (VDRYLRVKIPLRYKAVVTPRR) are Cytoplasmic-facing. A helical transmembrane segment spans residues 124 to 146 (AAVAIAGCWILSLVVGLTPMFGW). Residues 147–176 (NNLREVQRAWAANGSVGEPVIKCEFEKVIS) lie on the Extracellular side of the membrane. A glycan (N-linked (GlcNAc...) asparagine) is linked at Asn159. Residues 177–201 (MEYMVYFNFFVWVLPPLLLMVLIYL) form a helical membrane-spanning segment. Residues 202-235 (EVFYLIRRQLSKKASASSGDPHKYYGKELKIAKS) are Cytoplasmic-facing. The helical transmembrane segment at 236–259 (LALILFLFALSWLPLHILNCVTLF) threads the bilayer. At 260–267 (CPSCQKPS) the chain is on the extracellular side. The chain crosses the membrane as a helical span at residues 268-292 (ILVYTAIFLTHGNSAMNPIVYAFRI). At 293-328 (HKFRVTFLKIWNDHFRCRPAPAGDGDEDLPEEKPND) the chain is on the cytoplasmic side. Cys309 is lipidated: S-palmitoyl cysteine.

It belongs to the G-protein coupled receptor 1 family.

It is found in the cell membrane. Functionally, receptor for adenosine. The activity of this receptor is mediated by G proteins which inhibit adenylyl cyclase. In Oryctolagus cuniculus (Rabbit), this protein is Adenosine receptor A1 (ADORA1).